A 278-amino-acid chain; its full sequence is TATA box-binding protein-associated factor RNA polymerase I subunit D (278 aa).

Disordered stretches follow at residues 19-71 (LANR…SSFE) and 88-115 (KKRY…RRNP). Ser-23 carries the phosphoserine modification. Composition is skewed to basic residues over residues 43 to 53 (REKRNPIRKFV) and 88 to 99 (KKRYKKKKKKRY). Phosphoserine is present on residues Ser-138 and Ser-234.

As to quaternary structure, component of the transcription factor SL1/TIF-IB complex, composed of TBP and at least TAF1A, TAF1B, TAF1C and TAF1D. Interacts with UBTF.

The protein localises to the nucleus. Its function is as follows. Component of the transcription factor SL1/TIF-IB complex, which is involved in the assembly of the PIC (preinitiation complex) during RNA polymerase I-dependent transcription. The rate of PIC formation probably is primarily dependent on the rate of association of SL1/TIF-IB with the rDNA promoter. SL1/TIF-IB is involved in stabilization of nucleolar transcription factor 1/UBTF on rDNA. Formation of SL1/TIF-IB excludes the association of TBP with TFIID subunits. The sequence is that of TATA box-binding protein-associated factor RNA polymerase I subunit D (TAF1D) from Pongo abelii (Sumatran orangutan).